We begin with the raw amino-acid sequence, 540 residues long: Chaperonin GroEL 3 (540 aa).

ATP contacts are provided by residues 30–33 (TLGP), lysine 51, 87–91 (DGTTT), glycine 415, 479–481 (NAA), and aspartate 495.

It belongs to the chaperonin (HSP60) family. Forms a cylinder of 14 subunits composed of two heptameric rings stacked back-to-back. Interacts with the co-chaperonin GroES.

The protein localises to the cytoplasm. The enzyme catalyses ATP + H2O + a folded polypeptide = ADP + phosphate + an unfolded polypeptide.. Its function is as follows. Together with its co-chaperonin GroES, plays an essential role in assisting protein folding. The GroEL-GroES system forms a nano-cage that allows encapsulation of the non-native substrate proteins and provides a physical environment optimized to promote and accelerate protein folding. The protein is Chaperonin GroEL 3 of Burkholderia cenocepacia (strain HI2424).